Consider the following 247-residue polypeptide: Reticulon-like protein B8 (247 aa).

The Reticulon domain occupies serine 61–glutamate 247. A run of 3 helical transmembrane segments spans residues lysine 71–asparagine 91, phenylalanine 92–tryptophan 112, and phenylalanine 166–leucine 186.

It is found in the endoplasmic reticulum membrane. The polypeptide is Reticulon-like protein B8 (RTNLB8) (Arabidopsis thaliana (Mouse-ear cress)).